The following is a 603-amino-acid chain: UvrABC system protein C (603 aa).

Residues 15–92 (DQPGCYLMKD…IKKHDPRFNI (78 aa)) enclose the GIY-YIG domain. The 36-residue stretch at 197 to 232 (KTVKNDLMKKMQEAAENMEFEKAGEFRDQINAIETT) folds into the UVR domain.

This sequence belongs to the UvrC family. In terms of assembly, interacts with UvrB in an incision complex.

It is found in the cytoplasm. The UvrABC repair system catalyzes the recognition and processing of DNA lesions. UvrC both incises the 5' and 3' sides of the lesion. The N-terminal half is responsible for the 3' incision and the C-terminal half is responsible for the 5' incision. In Listeria monocytogenes serovar 1/2a (strain ATCC BAA-679 / EGD-e), this protein is UvrABC system protein C.